Consider the following 173-residue polypeptide: Large ribosomal subunit protein uL10 (173 aa).

This sequence belongs to the universal ribosomal protein uL10 family. In terms of assembly, part of the ribosomal stalk of the 50S ribosomal subunit. The N-terminus interacts with L11 and the large rRNA to form the base of the stalk. The C-terminus forms an elongated spine to which L12 dimers bind in a sequential fashion forming a multimeric L10(L12)X complex.

Its function is as follows. Forms part of the ribosomal stalk, playing a central role in the interaction of the ribosome with GTP-bound translation factors. This Christiangramia forsetii (strain DSM 17595 / CGMCC 1.15422 / KT0803) (Gramella forsetii) protein is Large ribosomal subunit protein uL10.